Consider the following 439-residue polypeptide: Glutamate--tRNA ligase 2 (439 aa).

Positions 6-16 (PSPTGDMHIGN) match the 'HIGH' region motif. The 'KMSKS' region signature appears at 232–236 (KMSKR). Residue Lys-235 participates in ATP binding.

The protein belongs to the class-I aminoacyl-tRNA synthetase family. Glutamate--tRNA ligase type 1 subfamily. In terms of assembly, monomer.

It is found in the cytoplasm. It catalyses the reaction tRNA(Glu) + L-glutamate + ATP = L-glutamyl-tRNA(Glu) + AMP + diphosphate. Functionally, catalyzes the attachment of glutamate to tRNA(Glu) in a two-step reaction: glutamate is first activated by ATP to form Glu-AMP and then transferred to the acceptor end of tRNA(Glu). This chain is Glutamate--tRNA ligase 2, found in Helicobacter pylori (strain HPAG1).